The sequence spans 101 residues: Protein TraL (101 aa).

The protein localises to the cell outer membrane. Its function is as follows. Membrane protein involved in F pilin formation. In Salmonella typhi, this protein is Protein TraL (traL).